The following is a 194-amino-acid chain: Transposon Tn2501 resolvase (194 aa).

One can recognise a Resolvase/invertase-type recombinase catalytic domain in the interval 3 to 143; that stretch reads RVFAYCRVST…SGIARAKATG (141 aa). Ser-11 functions as the O-(5'-phospho-DNA)-serine intermediate in the catalytic mechanism. Residues 170-189 constitute a DNA-binding region (H-T-H motif); the sequence is ISAIAREFNTTRQTILRVKA.

The protein belongs to the site-specific recombinase resolvase family.

Resolvase catalyzes the resolution (a site-specific recombination) of the cointegrated replicon to yield the final transposition products. The sequence is that of Transposon Tn2501 resolvase (tnpR) from Escherichia coli.